The chain runs to 296 residues: Iron-sulfur cluster carrier protein (296 aa).

The segment covering 1–17 (MSSNPFRIQNPQPQPQR) has biased composition (low complexity). Residues 1 to 23 (MSSNPFRIQNPQPQPQRQPRDLR) form a disordered region. 52 to 59 (GKGGVGKS) is a binding site for ATP.

It belongs to the Mrp/NBP35 ATP-binding proteins family. In terms of assembly, homodimer.

Its function is as follows. Binds and transfers iron-sulfur (Fe-S) clusters to target apoproteins. Can hydrolyze ATP. The chain is Iron-sulfur cluster carrier protein from Saccharolobus solfataricus (strain ATCC 35092 / DSM 1617 / JCM 11322 / P2) (Sulfolobus solfataricus).